The chain runs to 414 residues: 5-aminolevulinate synthase (414 aa).

The substrate site is built by arginine 22, serine 133, and lysine 152. The pyridoxal 5'-phosphate site is built by serine 185, histidine 213, and threonine 241. Residue lysine 244 is part of the active site. Lysine 244 carries the post-translational modification N6-(pyridoxal phosphate)lysine. Positions 273 and 274 each coordinate pyridoxal 5'-phosphate. A substrate-binding site is contributed by threonine 359.

Belongs to the class-II pyridoxal-phosphate-dependent aminotransferase family. In terms of assembly, homodimer. It depends on pyridoxal 5'-phosphate as a cofactor.

It catalyses the reaction succinyl-CoA + glycine + H(+) = 5-aminolevulinate + CO2 + CoA. The protein operates within porphyrin-containing compound metabolism; protoporphyrin-IX biosynthesis; 5-aminolevulinate from glycine: step 1/1. This chain is 5-aminolevulinate synthase (hemA), found in Rickettsia felis (strain ATCC VR-1525 / URRWXCal2) (Rickettsia azadi).